The following is a 92-amino-acid chain: Small ribosomal subunit protein bS20 (92 aa).

The span at 1–21 (MPLHKSAEKRLRQAARRNERN) shows a compositional bias: basic and acidic residues. 2 disordered regions span residues 1–26 (MPLHKSAEKRLRQAARRNERNRARKK) and 73–92 (ASRKKAQLTKALNNYTPTAS). The span at 82–92 (KALNNYTPTAS) shows a compositional bias: polar residues.

This sequence belongs to the bacterial ribosomal protein bS20 family.

Binds directly to 16S ribosomal RNA. This chain is Small ribosomal subunit protein bS20, found in Chlorobaculum tepidum (strain ATCC 49652 / DSM 12025 / NBRC 103806 / TLS) (Chlorobium tepidum).